A 396-amino-acid polypeptide reads, in one-letter code: Tryptophan synthase beta chain (396 aa).

Lys88 carries the post-translational modification N6-(pyridoxal phosphate)lysine.

It belongs to the TrpB family. As to quaternary structure, tetramer of two alpha and two beta chains. Pyridoxal 5'-phosphate is required as a cofactor.

It carries out the reaction (1S,2R)-1-C-(indol-3-yl)glycerol 3-phosphate + L-serine = D-glyceraldehyde 3-phosphate + L-tryptophan + H2O. It functions in the pathway amino-acid biosynthesis; L-tryptophan biosynthesis; L-tryptophan from chorismate: step 5/5. In terms of biological role, the beta subunit is responsible for the synthesis of L-tryptophan from indole and L-serine. In Actinobacillus pleuropneumoniae serotype 5b (strain L20), this protein is Tryptophan synthase beta chain.